The chain runs to 129 residues: Small ribosomal subunit protein uS11 (129 aa).

It belongs to the universal ribosomal protein uS11 family. In terms of assembly, part of the 30S ribosomal subunit. Interacts with proteins S7 and S18. Binds to IF-3.

In terms of biological role, located on the platform of the 30S subunit, it bridges several disparate RNA helices of the 16S rRNA. Forms part of the Shine-Dalgarno cleft in the 70S ribosome. This Baumannia cicadellinicola subsp. Homalodisca coagulata protein is Small ribosomal subunit protein uS11.